A 288-amino-acid polypeptide reads, in one-letter code: Shikimate dehydrogenase (NADP(+)) (288 aa).

Shikimate is bound by residues 18–20 and T65; that span reads SRS. The active-site Proton acceptor is the K69. E81 serves as a coordination point for NADP(+). Residues N90 and D106 each contribute to the shikimate site. Residues 131–135, 155–160, and M223 contribute to the NADP(+) site; these read GAGGA and NRTLAK. Residue Y225 coordinates shikimate. Residue G246 coordinates NADP(+).

Belongs to the shikimate dehydrogenase family. In terms of assembly, homodimer.

It carries out the reaction shikimate + NADP(+) = 3-dehydroshikimate + NADPH + H(+). It functions in the pathway metabolic intermediate biosynthesis; chorismate biosynthesis; chorismate from D-erythrose 4-phosphate and phosphoenolpyruvate: step 4/7. Its function is as follows. Involved in the biosynthesis of the chorismate, which leads to the biosynthesis of aromatic amino acids. Catalyzes the reversible NADPH linked reduction of 3-dehydroshikimate (DHSA) to yield shikimate (SA). This Verminephrobacter eiseniae (strain EF01-2) protein is Shikimate dehydrogenase (NADP(+)).